The sequence spans 360 residues: uncharacterized protein (360 aa).

The region spanning 4 to 235 (LSLQHIQKIY…PANMFVAGFI (232 aa)) is the ABC transporter domain. 37–44 (GPSGCGKS) is a binding site for ATP.

The protein belongs to the ABC transporter superfamily.

This is an uncharacterized protein from Escherichia coli O157:H7.